We begin with the raw amino-acid sequence, 805 residues long: Na(+)/H(+) antiporter subunit A1 (805 aa).

Transmembrane regions (helical) follow at residues 1-21 (MSLL…IPFV), 30-50 (LGWF…SYIS), 79-99 (LGLL…LYSI), 117-137 (LFMG…LYLF), 166-186 (MLVT…LSIA), 201-221 (EIQT…GAMT), 226-246 (FPFY…SAYL), 265-285 (IFAV…ITLF), 300-320 (ILAF…GVGA), 337-357 (FTAA…LFMI), 377-397 (LTIM…MAGI), 427-447 (LGIL…VYSI), 480-500 (ILAI…GSII), 531-551 (LGIY…IYLL), 591-611 (LVII…VTPF), 623-643 (PFEL…IFAK), 646-666 (LFSI…FIFF), 671-691 (LALT…LCFY), 707-727 (LVNI…GLIA), and 766-786 (TLFE…MIKL).

It belongs to the CPA3 antiporters (TC 2.A.63) subunit A family. As to quaternary structure, may form a heterooligomeric complex that consists of seven subunits: mnhA1, mnhB1, mnhC1, mnhD1, mnhE1, mnhF1 and mnhG1.

Its subcellular location is the cell membrane. Its function is as follows. Mnh complex is a Na(+)/H(+) antiporter involved in Na(+) excretion. The chain is Na(+)/H(+) antiporter subunit A1 (mnhA1) from Staphylococcus saprophyticus subsp. saprophyticus (strain ATCC 15305 / DSM 20229 / NCIMB 8711 / NCTC 7292 / S-41).